The chain runs to 233 residues: MGQKVNPIGLRLGINRNWESRWFPTKANMAENIGEDYKIRTFLKRKLYYAGISQILVERTAKKLRVTVVAARPGIIIGKKGSDVDVLRKELQNLIGKEVNINIKEERKAGASAQLAAESVATQLEKRIAFRRAMKKVIQGAQKAGAKGIKVSVSGRLGGAEMARTEWYLEGRVPLHTLRAKIDYGFAEAHTTYGNIGIKVWIFKGEVLQKGVQPEKTEESAPAKKPRRARRGK.

The KH type-2 domain occupies 39 to 107 (IRTFLKRKLY…EVNINIKEER (69 aa)). The segment at 211–233 (GVQPEKTEESAPAKKPRRARRGK) is disordered. The segment covering 213 to 222 (QPEKTEESAP) has biased composition (basic and acidic residues). Positions 224 to 233 (KKPRRARRGK) are enriched in basic residues.

This sequence belongs to the universal ribosomal protein uS3 family. Part of the 30S ribosomal subunit. Forms a tight complex with proteins S10 and S14.

Functionally, binds the lower part of the 30S subunit head. Binds mRNA in the 70S ribosome, positioning it for translation. The chain is Small ribosomal subunit protein uS3 from Campylobacter lari (strain RM2100 / D67 / ATCC BAA-1060).